The primary structure comprises 136 residues: Large ribosomal subunit protein uL16c (136 aa).

It belongs to the universal ribosomal protein uL16 family. In terms of assembly, part of the 50S ribosomal subunit.

Its subcellular location is the plastid. It localises to the chloroplast. This is Large ribosomal subunit protein uL16c from Chlamydomonas reinhardtii (Chlamydomonas smithii).